The following is an 806-amino-acid chain: Protein translocase subunit SecA (806 aa).

ATP contacts are provided by residues Q87, 105–109, and D493; that span reads GEGKT.

Belongs to the SecA family. Monomer and homodimer. Part of the essential Sec protein translocation apparatus which comprises SecA, SecYEG and auxiliary proteins SecDF. Other proteins may also be involved.

The protein localises to the cell membrane. Its subcellular location is the cytoplasm. The catalysed reaction is ATP + H2O + cellular proteinSide 1 = ADP + phosphate + cellular proteinSide 2.. Part of the Sec protein translocase complex. Interacts with the SecYEG preprotein conducting channel. Has a central role in coupling the hydrolysis of ATP to the transfer of proteins into and across the cell membrane, serving as an ATP-driven molecular motor driving the stepwise translocation of polypeptide chains across the membrane. In Mycoplasma genitalium (strain ATCC 33530 / DSM 19775 / NCTC 10195 / G37) (Mycoplasmoides genitalium), this protein is Protein translocase subunit SecA.